The sequence spans 39 residues: Cytochrome b559 subunit beta (39 aa).

A helical transmembrane segment spans residues 14–30 (WLTVHGLAVPTVSFLGS). His-18 serves as a coordination point for heme.

It belongs to the PsbE/PsbF family. Heterodimer of an alpha subunit and a beta subunit. PSII is composed of 1 copy each of membrane proteins PsbA, PsbB, PsbC, PsbD, PsbE, PsbF, PsbH, PsbI, PsbJ, PsbK, PsbL, PsbM, PsbT, PsbX, PsbY, PsbZ, Psb30/Ycf12, at least 3 peripheral proteins of the oxygen-evolving complex and a large number of cofactors. It forms dimeric complexes. The cofactor is heme b.

Its subcellular location is the plastid. It is found in the chloroplast thylakoid membrane. This b-type cytochrome is tightly associated with the reaction center of photosystem II (PSII). PSII is a light-driven water:plastoquinone oxidoreductase that uses light energy to abstract electrons from H(2)O, generating O(2) and a proton gradient subsequently used for ATP formation. It consists of a core antenna complex that captures photons, and an electron transfer chain that converts photonic excitation into a charge separation. In Lactuca sativa (Garden lettuce), this protein is Cytochrome b559 subunit beta.